Here is a 405-residue protein sequence, read N- to C-terminus: uncharacterized protein (405 aa).

The Cytoplasmic portion of the chain corresponds to 1–18; sequence MPEPVAEPALNGLRLNLR. The helical transmembrane segment at 19–39 threads the bilayer; sequence IVSIVMFNFASYLTIGLPLAV. Residues 40 to 46 lie on the Periplasmic side of the membrane; sequence LPGYVHD. A helical transmembrane segment spans residues 47–67; that stretch reads VMGFSAFWAGLVISLQYFATL. Topologically, residues 68-84 are cytoplasmic; sequence LSRPHAGRYADSLGPKK. A helical membrane pass occupies residues 85 to 105; the sequence is IVVFGLCGCFLSGLGYLTAGL. Residue Thr106 is a topological domain, periplasmic. Residues 107–127 form a helical membrane-spanning segment; sequence ASLPVISLLLLCLGRVILGIG. The Cytoplasmic portion of the chain corresponds to 128–155; sequence QSFAGTGSTLWGVGVVGSLHIGRVISWN. Residues 156 to 176 traverse the membrane as a helical segment; sequence GIVTYGAMAMGAPLGVVFYHW. Residue Gly177 is a topological domain, periplasmic. A helical membrane pass occupies residues 178 to 198; it reads GLQALALIIMGVALVAILLAI. Over 199–223 the chain is Cytoplasmic; that stretch reads PRPTVKASKGKPLPFRAVLGRVWLY. Residues 224 to 244 form a helical membrane-spanning segment; the sequence is GMALALASAGFGVIATFITLF. Residues 245–251 lie on the Periplasmic side of the membrane; the sequence is YDAKGWD. A helical membrane pass occupies residues 252–272; sequence GAAFALTLFSCAFVGTRLLFP. Topologically, residues 273 to 282 are cytoplasmic; that stretch reads NGINRIGGLN. Residues 283–303 traverse the membrane as a helical segment; that stretch reads VAMICFSVEIIGLLLVGVATM. The Periplasmic portion of the chain corresponds to 304–308; it reads PWMAK. Residues 309-329 traverse the membrane as a helical segment; that stretch reads IGVLLAGAGFSLVFPALGVVA. At 330 to 343 the chain is on the cytoplasmic side; the sequence is VKAVPQQNQGAALA. A helical membrane pass occupies residues 344-364; sequence TYTVFMDLSLGVTGPLAGLVM. A topological domain (periplasmic) is located at residue Ser365. Residues 366 to 386 traverse the membrane as a helical segment; the sequence is WAGVPVIYLAAAGLVAIALLL. Residues 387–405 lie on the Cytoplasmic side of the membrane; the sequence is TWRLKKRPPEHVPEAASSS.

It belongs to the major facilitator superfamily. YhhS family.

It localises to the cell inner membrane. Functionally, confers high-level resistance to glyphosate when overexpressed. Overexpression has no effect on intracellular arabinose concentrations. This is an uncharacterized protein from Escherichia coli (strain K12).